We begin with the raw amino-acid sequence, 432 residues long: Methylenetetrahydrofolate--tRNA-(uracil-5-)-methyltransferase TrmFO (432 aa).

FAD is bound at residue G7–G12.

The protein belongs to the MnmG family. TrmFO subfamily. Requires FAD as cofactor.

It is found in the cytoplasm. The catalysed reaction is uridine(54) in tRNA + (6R)-5,10-methylene-5,6,7,8-tetrahydrofolate + NADH + H(+) = 5-methyluridine(54) in tRNA + (6S)-5,6,7,8-tetrahydrofolate + NAD(+). The enzyme catalyses uridine(54) in tRNA + (6R)-5,10-methylene-5,6,7,8-tetrahydrofolate + NADPH + H(+) = 5-methyluridine(54) in tRNA + (6S)-5,6,7,8-tetrahydrofolate + NADP(+). In terms of biological role, catalyzes the folate-dependent formation of 5-methyl-uridine at position 54 (M-5-U54) in all tRNAs. This is Methylenetetrahydrofolate--tRNA-(uracil-5-)-methyltransferase TrmFO from Coprothermobacter proteolyticus (strain ATCC 35245 / DSM 5265 / OCM 4 / BT).